We begin with the raw amino-acid sequence, 199 residues long: Auxin-responsive protein IAA1 (199 aa).

The short motif at 25 to 29 is the EAR-like (transcriptional repression) element; sequence LTLRL. The tract at residues 31–74 is disordered; that stretch reads GSLAAAAAPDPDRKRSSPSSSDAADAADNSSPLAAAADAPPAPK. The segment covering 47–69 has biased composition (low complexity); it reads SPSSSDAADAADNSSPLAAAADA. Residues 93 to 187 enclose the PB1 domain; sequence AKFVKVAVDG…TCQRLRLMKS (95 aa).

It belongs to the Aux/IAA family. In terms of assembly, homodimers and heterodimers. In terms of tissue distribution, highly expressed in flowers. Expressed at low levels in roots and shoots.

The protein resides in the nucleus. Its function is as follows. Aux/IAA proteins are short-lived transcriptional factors that function as repressors of early auxin response genes at low auxin concentrations. This chain is Auxin-responsive protein IAA1 (IAA1), found in Oryza sativa subsp. japonica (Rice).